A 308-amino-acid polypeptide reads, in one-letter code: Glutaminase (308 aa).

Ser66, Asn117, Glu161, Asn168, Tyr192, Tyr244, and Val262 together coordinate substrate.

It belongs to the glutaminase family. Homotetramer.

It catalyses the reaction L-glutamine + H2O = L-glutamate + NH4(+). The chain is Glutaminase from Shigella dysenteriae serotype 1 (strain Sd197).